The primary structure comprises 332 residues: Fructose-1,6-bisphosphatase class 1 (332 aa).

Positions 91, 112, 114, and 115 each coordinate Mg(2+). Residues 115 to 118 (DGSS), Asn208, Tyr241, and Lys271 each bind substrate. Position 277 (Glu277) interacts with Mg(2+).

This sequence belongs to the FBPase class 1 family. As to quaternary structure, homotetramer. Mg(2+) serves as cofactor.

It is found in the cytoplasm. It carries out the reaction beta-D-fructose 1,6-bisphosphate + H2O = beta-D-fructose 6-phosphate + phosphate. It functions in the pathway carbohydrate biosynthesis; Calvin cycle. This Chlorobium phaeobacteroides (strain DSM 266 / SMG 266 / 2430) protein is Fructose-1,6-bisphosphatase class 1.